A 703-amino-acid chain; its full sequence is Zinc finger protein 750 (703 aa).

The CCHC-type zinc-finger motif lies at tyrosine 25–asparagine 51. Cysteine 27, cysteine 30, histidine 43, and cysteine 49 together coordinate Zn(2+). Disordered stretches follow at residues lysine 64–glutamate 113, proline 350–methionine 527, tryptophan 553–alanine 614, and arginine 630–serine 703. Residues lysine 67–serine 106 show a composition bias toward polar residues. Low complexity predominate over residues serine 352–serine 361. The span at threonine 367–methionine 394 shows a compositional bias: basic and acidic residues. Polar residues-rich tracts occupy residues serine 410–phenylalanine 421 and glycine 456–alanine 477. The segment covering threonine 574–lysine 611 has biased composition (basic and acidic residues). Residues glutamine 639–leucine 655 show a composition bias toward polar residues.

The protein resides in the nucleus. Functionally, transcription factor involved in epidermis differentiation. Required for terminal epidermal differentiation: acts downstream of p63/TP63 and activates expression of late epidermal differentiation genes. Specifically binds to the promoter of KLF4 and promotes its expression. In Mus musculus (Mouse), this protein is Zinc finger protein 750 (Znf750).